Here is a 643-residue protein sequence, read N- to C-terminus: Fructose-1,6-bisphosphatase class 3 (643 aa).

Belongs to the FBPase class 3 family. Mn(2+) is required as a cofactor.

The enzyme catalyses beta-D-fructose 1,6-bisphosphate + H2O = beta-D-fructose 6-phosphate + phosphate. Its pathway is carbohydrate biosynthesis; gluconeogenesis. This Lacticaseibacillus casei (strain BL23) (Lactobacillus casei) protein is Fructose-1,6-bisphosphatase class 3.